Reading from the N-terminus, the 152-residue chain is Probable flagellum biosynthesis repressor protein FlbT (152 aa).

Belongs to the FlbT family.

Its function is as follows. Has a post-transcriptional repressor function in flagellum biogenesis. Associates with the 5'-UTR of fljK mRNA and promotes its degradation. This Brucella abortus (strain S19) protein is Probable flagellum biosynthesis repressor protein FlbT.